The sequence spans 119 residues: Large ribosomal subunit protein uL24 (119 aa).

Belongs to the universal ribosomal protein uL24 family. As to quaternary structure, part of the 50S ribosomal subunit.

Its function is as follows. One of two assembly initiator proteins, it binds directly to the 5'-end of the 23S rRNA, where it nucleates assembly of the 50S subunit. In terms of biological role, one of the proteins that surrounds the polypeptide exit tunnel on the outside of the subunit. This is Large ribosomal subunit protein uL24 from Sulfurihydrogenibium sp. (strain YO3AOP1).